Here is a 691-residue protein sequence, read N- to C-terminus: Ubiquitin-like domain-containing protein CIP73 (691 aa).

The 76-residue stretch at 22 to 97 (IEIKIKMLDS…LHLVARHPDL (76 aa)) folds into the Ubiquitin-like domain. Disordered regions lie at residues 92 to 118 (ARHP…TGHG), 176 to 203 (TGLG…ISSD), 264 to 283 (RNEE…EGLS), 432 to 473 (ASTT…ASIA), 499 to 554 (SVNT…SSRV), 590 to 624 (EIHV…EPNV), and 645 to 691 (HIGR…QKME). 5 stretches are compositionally biased toward polar residues: residues 104–118 (PNHS…TGHG), 178–189 (LGRTSDFTGNPS), 273–283 (SRLSSTPEGLS), 446–465 (TQSA…QTTS), and 499–523 (SVNT…STAE). Residues 525 to 535 (TLHRQSMEDSA) show a composition bias toward basic and acidic residues. Over residues 536–554 (RNGTLPTPNTQQEPSSSRV) the composition is skewed to polar residues. The span at 597–617 (SSQGTTAGVTSAATSSGAAQA) shows a compositional bias: low complexity.

Interacts with CCAMK. Phosphorylated at the N-terminus by CCAMK. Highly epressed in roots. Expressed at very low levels in leaves and stems.

Its subcellular location is the nucleus. Its function is as follows. Involved in root nodulation. Required for root nodule organogenesis after infection by symbiotic rhizobia. Probably not involved in arbuscular mycorrhizal (AM) symbiosis. Acts downstream of CCAMK. The chain is Ubiquitin-like domain-containing protein CIP73 from Lotus japonicus (Lotus corniculatus var. japonicus).